The sequence spans 452 residues: Phosphoglucosamine mutase (452 aa).

Residue Ser-109 is the Phosphoserine intermediate of the active site. Mg(2+)-binding residues include Ser-109, Asp-248, Asp-250, and Asp-252. Residue Ser-109 is modified to Phosphoserine.

It belongs to the phosphohexose mutase family. Requires Mg(2+) as cofactor. Post-translationally, activated by phosphorylation.

The enzyme catalyses alpha-D-glucosamine 1-phosphate = D-glucosamine 6-phosphate. In terms of biological role, catalyzes the conversion of glucosamine-6-phosphate to glucosamine-1-phosphate. This Erythrobacter litoralis (strain HTCC2594) protein is Phosphoglucosamine mutase.